The sequence spans 524 residues: MIAYIEPYFLENDAEAASAATAAGKSTDGVSESLNIQGEILCGGAAADIAGRDFGGMNCVKPLAVVRPVGPEDIAGAVKAALRSDKLTVAARGNGHSINGQAMAEGGLVVDMSTTAENHFEVGYLSGGDATAFVDVSGGALWEDVLKRCVSEYGLAPRSWTDYLGLTVGGTLSNAGVSGQAFRYGPQTSNVTELDVVTGNGDVVTCSEIENSELFFSVLGGLGQFGIITRARVLLQPAPDMVRWIRVVYTEFDEFTQDAEWLVSQKNESSFDYVEGFVFVNGADPVNGWPTVPLHPDHEFDPTRLPQSCGSVLYCLELGLHYRDSDSNSTIDKRVERLIGRLRFNEGLRFEVDLPYVDFLLRVKRSEEIAKENGTWETPHPWLNLFVSKRDIGDFNRTVFKELVKNGVNGPMLVYPLLRSRWDDRTSVVIPEEGEIFYIVALLRFVPPCAKVSSVEKMVAQNQEIVHWCVKNGIDYKLYLPHYKSQEEWIRHFGNRWSRFVDRKAMFDPMAILSPGQKIFNRSL.

In terms of domain architecture, FAD-binding PCMH-type spans 58-238; sequence NCVKPLAVVR…TRARVLLQPA (181 aa). Residues alanine 91, glycine 93, asparagine 94, and glycine 95 each contribute to the FAD site. A Pros-8alpha-FAD histidine modification is found at histidine 96. FAD is bound by residues serine 97, glutamine 101, aspartate 162, threonine 167, serine 173, valine 177, isoleucine 228, tyrosine 479, serine 514, and glutamine 517.

It belongs to the oxygen-dependent FAD-linked oxidoreductase family. FAD is required as a cofactor. As to expression, expressed in the vasculature of roots, hypocotyls, cotyledons and leaves of young seedlings. In flowers, expressed in the transmitting tissue of the gynoecium prior to pollination. Expressed in the mature embryo sac with maximum activity in the egg cell and the synergids.

Its subcellular location is the cytoplasm. It is found in the cytosol. It catalyses the reaction N(6)-dimethylallyladenine + A + H2O = 3-methyl-2-butenal + adenine + AH2. Its function is as follows. Catalyzes the oxidation of cytokinins, a family of N(6)-substituted adenine derivatives that are plant hormones, where the substituent is an isopentenyl group. Catalyzes in vitro the oxidation of various types of cytokinin nucleotides that are known as direct products of cytokinin biosynthesis. The protein is Cytokinin dehydrogenase 7 (CKX7) of Arabidopsis thaliana (Mouse-ear cress).